The sequence spans 443 residues: UDP-N-acetylmuramate--L-alanine ligase (443 aa).

Residue 110 to 116 coordinates ATP; that stretch reads GAHGKTS.

Belongs to the MurCDEF family.

Its subcellular location is the cytoplasm. It carries out the reaction UDP-N-acetyl-alpha-D-muramate + L-alanine + ATP = UDP-N-acetyl-alpha-D-muramoyl-L-alanine + ADP + phosphate + H(+). It functions in the pathway cell wall biogenesis; peptidoglycan biosynthesis. Its function is as follows. Cell wall formation. This Streptococcus suis (strain 98HAH33) protein is UDP-N-acetylmuramate--L-alanine ligase.